Consider the following 416-residue polypeptide: Gamma-glutamyl phosphate reductase (416 aa).

This sequence belongs to the gamma-glutamyl phosphate reductase family.

It is found in the cytoplasm. It catalyses the reaction L-glutamate 5-semialdehyde + phosphate + NADP(+) = L-glutamyl 5-phosphate + NADPH + H(+). It functions in the pathway amino-acid biosynthesis; L-proline biosynthesis; L-glutamate 5-semialdehyde from L-glutamate: step 2/2. In terms of biological role, catalyzes the NADPH-dependent reduction of L-glutamate 5-phosphate into L-glutamate 5-semialdehyde and phosphate. The product spontaneously undergoes cyclization to form 1-pyrroline-5-carboxylate. The polypeptide is Gamma-glutamyl phosphate reductase (Leptospira interrogans serogroup Icterohaemorrhagiae serovar copenhageni (strain Fiocruz L1-130)).